Reading from the N-terminus, the 31-residue chain is Cytochrome b6-f complex subunit 6 (31 aa).

A helical transmembrane segment spans residues 3 to 23 (ILISYFCFLLIFFLFTLILFF).

The protein belongs to the PetL family. The 4 large subunits of the cytochrome b6-f complex are cytochrome b6, subunit IV (17 kDa polypeptide, PetD), cytochrome f and the Rieske protein, while the 4 small subunits are PetG, PetL, PetM and PetN. The complex functions as a dimer.

It is found in the plastid. It localises to the chloroplast thylakoid membrane. In terms of biological role, component of the cytochrome b6-f complex, which mediates electron transfer between photosystem II (PSII) and photosystem I (PSI), cyclic electron flow around PSI, and state transitions. PetL is important for photoautotrophic growth as well as for electron transfer efficiency and stability of the cytochrome b6-f complex. The polypeptide is Cytochrome b6-f complex subunit 6 (Gnetum parvifolium (Small-leaved jointfir)).